A 457-amino-acid polypeptide reads, in one-letter code: UDP-N-acetylmuramoylalanine--D-glutamate ligase (457 aa).

Residue 116-122 coordinates ATP; the sequence is GTNGKTT.

It belongs to the MurCDEF family.

Its subcellular location is the cytoplasm. It catalyses the reaction UDP-N-acetyl-alpha-D-muramoyl-L-alanine + D-glutamate + ATP = UDP-N-acetyl-alpha-D-muramoyl-L-alanyl-D-glutamate + ADP + phosphate + H(+). Its pathway is cell wall biogenesis; peptidoglycan biosynthesis. Cell wall formation. Catalyzes the addition of glutamate to the nucleotide precursor UDP-N-acetylmuramoyl-L-alanine (UMA). The chain is UDP-N-acetylmuramoylalanine--D-glutamate ligase from Caldicellulosiruptor bescii (strain ATCC BAA-1888 / DSM 6725 / KCTC 15123 / Z-1320) (Anaerocellum thermophilum).